Here is a 451-residue protein sequence, read N- to C-terminus: Tubulin alpha chain (451 aa).

A GTP-binding site is contributed by Q11. An N6-acetyllysine modification is found at K40. Residues E71, G144, T145, T179, N206, and N228 each contribute to the GTP site. Residue E71 coordinates Mg(2+). The active site involves E254.

This sequence belongs to the tubulin family. In terms of assembly, dimer of alpha and beta chains. A typical microtubule is a hollow water-filled tube with an outer diameter of 25 nm and an inner diameter of 15 nM. Alpha-beta heterodimers associate head-to-tail to form protofilaments running lengthwise along the microtubule wall with the beta-tubulin subunit facing the microtubule plus end conferring a structural polarity. Microtubules usually have 13 protofilaments but different protofilament numbers can be found in some organisms and specialized cells. It depends on Mg(2+) as a cofactor. Undergoes a tyrosination/detyrosination cycle, the cyclic removal and re-addition of a C-terminal tyrosine residue by the enzymes tubulin tyrosine carboxypeptidase (TTCP) and tubulin tyrosine ligase (TTL), respectively. In terms of processing, acetylation of alpha chains at Lys-40 stabilizes microtubules and affects affinity and processivity of microtubule motors. This modification has a role in multiple cellular functions, ranging from cell motility, cell cycle progression or cell differentiation to intracellular trafficking and signaling.

Its subcellular location is the cytoplasm. The protein resides in the cytoskeleton. It carries out the reaction GTP + H2O = GDP + phosphate + H(+). Functionally, tubulin is the major constituent of microtubules, a cylinder consisting of laterally associated linear protofilaments composed of alpha- and beta-tubulin heterodimers. Microtubules grow by the addition of GTP-tubulin dimers to the microtubule end, where a stabilizing cap forms. Below the cap, tubulin dimers are in GDP-bound state, owing to GTPase activity of alpha-tubulin. This Trypanosoma cruzi protein is Tubulin alpha chain.